We begin with the raw amino-acid sequence, 398 residues long: Polyferredoxin protein VhuB (398 aa).

11 consecutive 4Fe-4S ferredoxin-type domains span residues 2-31 (AGIK…IAPF), 25-53 (AIEI…VENN), 54-83 (GKLI…VDDR), 82-111 (DRFP…IPGK), 123-152 (QEPI…IEDE), 152-181 (ELAV…VAGK), 191-219 (KSFT…YNRE), 220-249 (DLIV…LEVE), 259-291 (EGLV…MINQ), 300-331 (TKTD…MGKI), and 339-368 (NRIE…LTGD). [4Fe-4S] cluster contacts are provided by C11, C14, C17, C21, C34, C37, C40, C44, C63, C66, C69, C73, C91, C94, C97, C101, C132, C135, C138, C142, C161, C164, C167, C171, C199, C202, C205, C209, C229, C232, C235, C239, C268, C271, C274, C278, C311, C314, C317, C321, C348, C351, C354, C358, C377, C380, C383, and C387.

[4Fe-4S] cluster is required as a cofactor.

The protein is Polyferredoxin protein VhuB (vhuB) of Methanococcus voltae.